The primary structure comprises 406 residues: Succinylornithine transaminase (406 aa).

K252 carries the N6-(pyridoxal phosphate)lysine modification.

Belongs to the class-III pyridoxal-phosphate-dependent aminotransferase family. AstC subfamily. Pyridoxal 5'-phosphate is required as a cofactor.

The enzyme catalyses N(2)-succinyl-L-ornithine + 2-oxoglutarate = N-succinyl-L-glutamate 5-semialdehyde + L-glutamate. It functions in the pathway amino-acid degradation; L-arginine degradation via AST pathway; L-glutamate and succinate from L-arginine: step 3/5. In terms of biological role, catalyzes the transamination of N(2)-succinylornithine and alpha-ketoglutarate into N(2)-succinylglutamate semialdehyde and glutamate. Can also act as an acetylornithine aminotransferase. This is Succinylornithine transaminase from Escherichia coli (strain SMS-3-5 / SECEC).